The primary structure comprises 417 residues: Serine hydroxymethyltransferase (417 aa).

(6S)-5,6,7,8-tetrahydrofolate contacts are provided by residues leucine 116 and 120 to 122 (GHL). N6-(pyridoxal phosphate)lysine is present on lysine 225.

The protein belongs to the SHMT family. In terms of assembly, homodimer. Pyridoxal 5'-phosphate is required as a cofactor.

It localises to the cytoplasm. The catalysed reaction is (6R)-5,10-methylene-5,6,7,8-tetrahydrofolate + glycine + H2O = (6S)-5,6,7,8-tetrahydrofolate + L-serine. The protein operates within one-carbon metabolism; tetrahydrofolate interconversion. It participates in amino-acid biosynthesis; glycine biosynthesis; glycine from L-serine: step 1/1. Its function is as follows. Catalyzes the reversible interconversion of serine and glycine with tetrahydrofolate (THF) serving as the one-carbon carrier. This reaction serves as the major source of one-carbon groups required for the biosynthesis of purines, thymidylate, methionine, and other important biomolecules. Also exhibits THF-independent aldolase activity toward beta-hydroxyamino acids, producing glycine and aldehydes, via a retro-aldol mechanism. This Hydrogenobaculum sp. (strain Y04AAS1) protein is Serine hydroxymethyltransferase.